A 103-amino-acid chain; its full sequence is Small ribosomal subunit protein uS10 (103 aa).

The protein belongs to the universal ribosomal protein uS10 family. Part of the 30S ribosomal subunit.

Involved in the binding of tRNA to the ribosomes. The chain is Small ribosomal subunit protein uS10 from Ruthia magnifica subsp. Calyptogena magnifica.